The following is a 155-amino-acid chain: Ribosomal RNA large subunit methyltransferase H (155 aa).

Residues Leu73, Gly104, and 123 to 128 each bind S-adenosyl-L-methionine; that span reads ISKMTF.

It belongs to the RNA methyltransferase RlmH family. As to quaternary structure, homodimer.

Its subcellular location is the cytoplasm. The enzyme catalyses pseudouridine(1915) in 23S rRNA + S-adenosyl-L-methionine = N(3)-methylpseudouridine(1915) in 23S rRNA + S-adenosyl-L-homocysteine + H(+). In terms of biological role, specifically methylates the pseudouridine at position 1915 (m3Psi1915) in 23S rRNA. In Francisella tularensis subsp. novicida (strain U112), this protein is Ribosomal RNA large subunit methyltransferase H.